Reading from the N-terminus, the 949-residue chain is MAM domain-containing glycosylphosphatidylinositol anchor protein 2 (949 aa).

The N-terminal stretch at 1–25 (MDLVYGLVWLLTVLLEGISGQGVYA) is a signal peptide. 2 Ig-like domains span residues 27–127 (PTVR…IRVD) and 134–232 (PVVT…KMVS). Intrachain disulfides connect Cys-62-Cys-110 and Cys-159-Cys-216. N-linked (GlcNAc...) asparagine glycans are attached at residues Asn-92, Asn-213, and Asn-237. 4 consecutive Ig-like domains span residues 242–328 (PSIK…NIIV), 340–436 (PDPY…VNIS), 442–533 (PNLT…ALVQ), and 540–627 (PAVE…FLVT). Intrachain disulfides connect Cys-264–Cys-310 and Cys-359–Cys-417. Residues Asn-434, Asn-443, Asn-504, Asn-610, and Asn-703 are each glycosylated (N-linked (GlcNAc...) asparagine). 2 disulfide bridges follow: Cys-465–Cys-515 and Cys-561–Cys-611. One can recognise a Fibronectin type-III domain in the interval 638–738 (DTYNPVWQNR…TIRVIKYTGE (101 aa)). In terms of domain architecture, MAM spans 739–914 (FHCGFEDGNI…VSIAEGECAK (176 aa)). Asp-924 carries the GPI-anchor amidated aspartate lipid modification. Positions 925 to 949 (GAVGILVHIWLFPVIILISILSPRR) are cleaved as a propeptide — removed in mature form.

Interacts (through the Ig-like domains) with NLGN2. As to expression, expressed predominantly in neuronal tissue. Expressed in brain.

It is found in the cell membrane. May be involved in cell-cell interactions. This chain is MAM domain-containing glycosylphosphatidylinositol anchor protein 2 (Mdga2), found in Rattus norvegicus (Rat).